The sequence spans 152 residues: 3-dehydroquinate dehydratase (152 aa).

Tyr-26 functions as the Proton acceptor in the catalytic mechanism. Residues Asn-77, His-83, and Asp-90 each contribute to the substrate site. His-103 functions as the Proton donor in the catalytic mechanism. Substrate is bound by residues 104–105 and Arg-114; that span reads LS.

The protein belongs to the type-II 3-dehydroquinase family. As to quaternary structure, homododecamer.

The enzyme catalyses 3-dehydroquinate = 3-dehydroshikimate + H2O. It functions in the pathway metabolic intermediate biosynthesis; chorismate biosynthesis; chorismate from D-erythrose 4-phosphate and phosphoenolpyruvate: step 3/7. Functionally, catalyzes a trans-dehydration via an enolate intermediate. The chain is 3-dehydroquinate dehydratase (aroQ) from Synechocystis sp. (strain ATCC 27184 / PCC 6803 / Kazusa).